A 117-amino-acid chain; its full sequence is Immunoglobulin lambda variable 1-51 (117 aa).

The N-terminal stretch at 1-19 (MTCSPLLLTLLIHCTGSWA) is a signal peptide. At Gln-20 the chain carries Pyrrolidone carboxylic acid. The framework-1 stretch occupies residues 20–44 (QSVLTQPPSVSAAPGQKVTISCSGS). One can recognise an Ig-like domain in the interval 20–117 (QSVLTQPPSV…CGTWDSSLSA (98 aa)). Cys-41 and Cys-108 are joined by a disulfide. A complementarity-determining-1 region spans residues 45–52 (SSNIGNNY). Residues 53–69 (VSWYQQLPGTAPKLLIY) are framework-2. Residues 70-72 (DNN) form a complementarity-determining-2 region. A framework-3 region spans residues 73–108 (KRPSGIPDRFSGSKSGTSATLGITGLQTGDEADYYC). The segment at 109–117 (GTWDSSLSA) is complementarity-determining-3.

Immunoglobulins are composed of two identical heavy chains and two identical light chains; disulfide-linked.

Its subcellular location is the secreted. It is found in the cell membrane. Functionally, v region of the variable domain of immunoglobulin light chains that participates in the antigen recognition. Immunoglobulins, also known as antibodies, are membrane-bound or secreted glycoproteins produced by B lymphocytes. In the recognition phase of humoral immunity, the membrane-bound immunoglobulins serve as receptors which, upon binding of a specific antigen, trigger the clonal expansion and differentiation of B lymphocytes into immunoglobulins-secreting plasma cells. Secreted immunoglobulins mediate the effector phase of humoral immunity, which results in the elimination of bound antigens. The antigen binding site is formed by the variable domain of one heavy chain, together with that of its associated light chain. Thus, each immunoglobulin has two antigen binding sites with remarkable affinity for a particular antigen. The variable domains are assembled by a process called V-(D)-J rearrangement and can then be subjected to somatic hypermutations which, after exposure to antigen and selection, allow affinity maturation for a particular antigen. The chain is Immunoglobulin lambda variable 1-51 from Homo sapiens (Human).